A 658-amino-acid polypeptide reads, in one-letter code: UvrABC system protein B (658 aa).

Residues 25-416 (QFIHNGAQYS…QEHIAEQIIR (392 aa)) form the Helicase ATP-binding domain. 38 to 45 (GVTGSGKT) provides a ligand contact to ATP. Residues 91 to 114 (HFDYYQPEAYIPRRDLFIEKDSSI) carry the Beta-hairpin motif. Positions 433 to 607 (AVLDLYDEIK…ELKIESSGLS (175 aa)) constitute a Helicase C-terminal domain. Residues 623–658 (ESIIKELNIKMHQAAKALEFEEAARLRDEIARIRTM) enclose the UVR domain.

This sequence belongs to the UvrB family. In terms of assembly, forms a heterotetramer with UvrA during the search for lesions. Interacts with UvrC in an incision complex.

Its subcellular location is the cytoplasm. Its function is as follows. The UvrABC repair system catalyzes the recognition and processing of DNA lesions. A damage recognition complex composed of 2 UvrA and 2 UvrB subunits scans DNA for abnormalities. Upon binding of the UvrA(2)B(2) complex to a putative damaged site, the DNA wraps around one UvrB monomer. DNA wrap is dependent on ATP binding by UvrB and probably causes local melting of the DNA helix, facilitating insertion of UvrB beta-hairpin between the DNA strands. Then UvrB probes one DNA strand for the presence of a lesion. If a lesion is found the UvrA subunits dissociate and the UvrB-DNA preincision complex is formed. This complex is subsequently bound by UvrC and the second UvrB is released. If no lesion is found, the DNA wraps around the other UvrB subunit that will check the other stand for damage. This chain is UvrABC system protein B, found in Helicobacter hepaticus (strain ATCC 51449 / 3B1).